Here is a 361-residue protein sequence, read N- to C-terminus: Feruloyl CoA ortho-hydroxylase 1 (361 aa).

Positions 204–312 (TKESLFMGSI…RISVPIFVNP (109 aa)) constitute a Fe2OG dioxygenase domain. Tyr220 provides a ligand contact to 2-oxoglutarate. Residues His235, Asp237, and His293 each contribute to the Fe cation site. 2-oxoglutarate contacts are provided by Arg303 and Ser305.

The protein belongs to the iron/ascorbate-dependent oxidoreductase family. The cofactor is L-ascorbate. Fe(2+) serves as cofactor. As to expression, highly expressed in roots, especially in the cortex.

The enzyme catalyses (E)-feruloyl-CoA + 2-oxoglutarate + O2 = (E)-6-hydroxyferuloyl-CoA + succinate + CO2. It carries out the reaction (E)-6-hydroxyferuloyl-CoA = scopoletin + CoA. It functions in the pathway phenylpropanoid metabolism. 2-oxoglutarate (OG)- and Fe(II)-dependent dioxygenase (2OGD) involved in scopoletin biosynthesis. Converts feruloyl CoA into 6'-hydroxyferuloyl CoA but has no activity with ferulic acid, feruloylquinic acid, caffeic acid, caffeoyl CoA, p-coumaric acid, cinnamic acid, cinnamoyl CoA or benzoyl CoA. Required for the production and secretion of compounds (e.g. fluorescent coumarins) that facilitate the mobilization and uptake of iron from sources with low bioavailability or in high pH-induced iron deficiency conditions. Involved in the pathway of sideretin biosynthesis from feruloyl CoA, a redox-active catecholic metabolite exuded by roots in response to iron deficiency in order to facilitate the uptake of iron; this pathway consists in the successive conversion from feruloyl CoA to scopoletin, from scopoletin to fraxetin and from fraxetin to sideretin. Catalyzes the biosynthesis of scopoletin from feruloyl CoA. The sequence is that of Feruloyl CoA ortho-hydroxylase 1 from Arabidopsis thaliana (Mouse-ear cress).